Consider the following 887-residue polypeptide: DNA gyrase subunit A (887 aa).

The Topo IIA-type catalytic domain maps to 35-501 (LPDVRDGLKP…GFEDLEDEDL (467 aa)). Tyrosine 123 serves as the catalytic O-(5'-phospho-DNA)-tyrosine intermediate. Residues 528–534 (QNRGGRG) carry the GyrA-box motif. The tract at residues 811–865 (KEDAEDETNEDEQSTSTVSEDGTEQQREAVVNDETPGNAIHTEVIDSEENDEDGR) is disordered. Residues 813 to 823 (DAEDETNEDEQ) are compositionally biased toward acidic residues.

The protein belongs to the type II topoisomerase GyrA/ParC subunit family. In terms of assembly, heterotetramer, composed of two GyrA and two GyrB chains. In the heterotetramer, GyrA contains the active site tyrosine that forms a transient covalent intermediate with DNA, while GyrB binds cofactors and catalyzes ATP hydrolysis.

The protein resides in the cytoplasm. The enzyme catalyses ATP-dependent breakage, passage and rejoining of double-stranded DNA.. In terms of biological role, a type II topoisomerase that negatively supercoils closed circular double-stranded (ds) DNA in an ATP-dependent manner to modulate DNA topology and maintain chromosomes in an underwound state. Negative supercoiling favors strand separation, and DNA replication, transcription, recombination and repair, all of which involve strand separation. Also able to catalyze the interconversion of other topological isomers of dsDNA rings, including catenanes and knotted rings. Type II topoisomerases break and join 2 DNA strands simultaneously in an ATP-dependent manner. The sequence is that of DNA gyrase subunit A from Staphylococcus aureus (strain MSSA476).